A 276-amino-acid polypeptide reads, in one-letter code: Probable endonuclease 4 (276 aa).

His67, His107, Glu142, Asp176, His179, His211, Asp224, His226, and Glu256 together coordinate Zn(2+).

It belongs to the AP endonuclease 2 family. Zn(2+) serves as cofactor.

It carries out the reaction Endonucleolytic cleavage to 5'-phosphooligonucleotide end-products.. Functionally, endonuclease IV plays a role in DNA repair. It cleaves phosphodiester bonds at apurinic or apyrimidinic (AP) sites, generating a 3'-hydroxyl group and a 5'-terminal sugar phosphate. This is Probable endonuclease 4 from Methanosphaera stadtmanae (strain ATCC 43021 / DSM 3091 / JCM 11832 / MCB-3).